Consider the following 493-residue polypeptide: Probable malate:quinone oxidoreductase (493 aa).

Belongs to the MQO family. It depends on FAD as a cofactor.

The enzyme catalyses (S)-malate + a quinone = a quinol + oxaloacetate. It participates in carbohydrate metabolism; tricarboxylic acid cycle; oxaloacetate from (S)-malate (quinone route): step 1/1. The protein is Probable malate:quinone oxidoreductase of Lysinibacillus sphaericus (strain C3-41).